Consider the following 837-residue polypeptide: Protein translocase subunit SecA 1 (837 aa).

ATP-binding positions include Q85, 103 to 107, and D492; that span reads GEGKT. The segment covering 787–806 has biased composition (basic and acidic residues); that stretch reads QEVAKGEAVHPKEDGEEPKR. Residues 787-811 are disordered; that stretch reads QEVAKGEAVHPKEDGEEPKRKPVRK. 4 residues coordinate Zn(2+): C821, C823, C832, and C833.

The protein belongs to the SecA family. Monomer and homodimer. Part of the essential Sec protein translocation apparatus which comprises SecA, SecYEG and auxiliary proteins SecDF. Other proteins may also be involved. Requires Zn(2+) as cofactor.

The protein localises to the cell membrane. It is found in the cytoplasm. The catalysed reaction is ATP + H2O + cellular proteinSide 1 = ADP + phosphate + cellular proteinSide 2.. Its function is as follows. Part of the Sec protein translocase complex. Interacts with the SecYEG preprotein conducting channel. Has a central role in coupling the hydrolysis of ATP to the transfer of proteins into and across the cell membrane, serving as an ATP-driven molecular motor driving the stepwise translocation of polypeptide chains across the membrane. The polypeptide is Protein translocase subunit SecA 1 (Geobacillus kaustophilus (strain HTA426)).